Consider the following 144-residue polypeptide: Na(+)/H(+) antiporter subunit B (144 aa).

Transmembrane regions (helical) follow at residues 9 to 31, 41 to 58, 75 to 97, and 117 to 139; these read VLLH…YLFF, FIGG…YLGF, IAFG…DPYL, and ALPF…ILTI.

It belongs to the CPA3 antiporters (TC 2.A.63) subunit B family. In terms of assembly, forms a heterooligomeric complex that consists of seven subunits: MrpA, MrpB, MrpC, MrpD, MrpE, MrpF and MrpG.

It is found in the cell membrane. Mnh complex is a Na(+)Li(+)/H(+) antiporter involved in Na(+) and/or Li(+) excretion and Na(+) resistance. Na(+)/H(+) antiport consumes a transmembrane electrical potential, and is thus inferred to be electrogenic. Does not transport K(+), Ca(2+) or Mg(2+). This is Na(+)/H(+) antiporter subunit B (mrpB) from Alkalihalophilus pseudofirmus (strain ATCC BAA-2126 / JCM 17055 / OF4) (Bacillus pseudofirmus).